The sequence spans 219 residues: Ribosome maturation factor RimP (219 aa).

Residues 195–219 (EGRIPGDDLGAEPEDVASTETQEKK) form a disordered region.

It belongs to the RimP family.

The protein resides in the cytoplasm. Functionally, required for maturation of 30S ribosomal subunits. The polypeptide is Ribosome maturation factor RimP (Brucella abortus (strain S19)).